Consider the following 99-residue polypeptide: MLEQQRNPADALTVSVLNAQSQVTSKPLRDSVKQALRNYLAQLDGQDVNDLYELVLAEVEHPMLDMIMQYTRGNQTRAANMLGINRGTLRKKLKKYGMG.

The segment at residues 75–94 (QTRAANMLGINRGTLRKKLK) is a DNA-binding region (H-T-H motif).

Belongs to the transcriptional regulatory Fis family. In terms of assembly, homodimer.

Activates ribosomal RNA transcription. Plays a direct role in upstream activation of rRNA promoters. This is DNA-binding protein Fis from Haemophilus influenzae (strain 86-028NP).